The chain runs to 490 residues: Cobyric acid synthase (490 aa).

The GATase cobBQ-type domain maps to 252–439; the sequence is RLKVVVPVLP…LHGLFESTAA (188 aa). Catalysis depends on Cys333, which acts as the Nucleophile. The active site involves His431.

The protein belongs to the CobB/CobQ family. CobQ subfamily.

The protein operates within cofactor biosynthesis; adenosylcobalamin biosynthesis. In terms of biological role, catalyzes amidations at positions B, D, E, and G on adenosylcobyrinic A,C-diamide. NH(2) groups are provided by glutamine, and one molecule of ATP is hydrogenolyzed for each amidation. This is Cobyric acid synthase from Pseudomonas paraeruginosa (strain DSM 24068 / PA7) (Pseudomonas aeruginosa (strain PA7)).